We begin with the raw amino-acid sequence, 1865 residues long: Dedicator of cytokinesis protein 1 (1865 aa).

The SH3 domain maps to 9–70; sequence REEKYGVAFY…PASYIHLKEA (62 aa). A C2 DOCK-type domain is found at 425 to 609; sequence RNDIYVTLVQ…DSFQISTLVC (185 aa). Residues 1207–1617 form the DOCKER domain; the sequence is YKEIEREEMY…VEKEYGVRIM (411 aa). Disordered regions lie at residues 1619–1716 and 1732–1865; these read SSLD…EFKP and TISP…GIVQ. Residues 1639-1666 show a composition bias toward low complexity; that stretch reads PSSSRPLSVASVSSLSSDSTPSRPGSDG. Residues 1680–1694 show a composition bias toward basic and acidic residues; that stretch reads RSQDKLDKDDLEKEK. At serine 1681 the chain carries Phosphoserine. The phosphoinositide-binding stretch occupies residues 1687 to 1695; that stretch reads KDDLEKEKK. Positions 1695–1704 are enriched in basic residues; sequence KDKKKEKRNS. Positions 1705-1716 are enriched in basic and acidic residues; it reads KHQEIFEKEFKP. Phosphoserine is present on residues serine 1743, serine 1751, serine 1756, serine 1761, and serine 1764. Over residues 1756–1766 the composition is skewed to low complexity; sequence SVSPSSPSSQQ. Residues threonine 1767 and threonine 1772 each carry the phosphothreonine modification. Positions 1793–1819 are interaction with NCK2 second and third SH3 domain (minor); sequence ADVADVPPPLPLKGSVADYGNLMENQD. Residues 1799 to 1805 carry the SH3-binding; interaction with CRK motif; the sequence is PPPLPLK. Residues 1820 to 1836 are interaction with NCK2 third SH3 domain (major); the sequence is LLGSPTPPPPPPHQRHL. Residues 1824–1851 show a composition bias toward pro residues; sequence PTPPPPPPHQRHLPPPLPSKTPPPPPPK. The segment at 1837 to 1852 is interaction with NCK2 (minor); that stretch reads PPPLPSKTPPPPPPKT. Residues 1838-1843 carry the SH3-binding; interaction with CRK motif; that stretch reads PPLPSK. Over residues 1855–1865 the composition is skewed to polar residues; sequence KQASVDSGIVQ. Serine 1858 is modified (phosphoserine).

The protein belongs to the DOCK family. In terms of assembly, interacts with the SH3 domains of CRK and NCK2 via multiple sites. Interacts with nucleotide-free RAC1 via its DOCKER domain. Interacts with ELMO1, ELMO2 and probably ELMO3 via its SH3 domain. Interacts with ADGRB1. Identified in a complex with AUTS2 and ELMO2. Highly expressed in placenta, lung, kidney, pancreas and ovary. Expressed at intermediate level in thymus, testes and colon.

The protein localises to the cytoplasm. The protein resides in the membrane. Involved in cytoskeletal rearrangements required for phagocytosis of apoptotic cells and cell motility. Along with DOCK1, mediates CRK/CRKL regulation of epithelial and endothelial cell spreading and migration on type IV collagen. Functions as a guanine nucleotide exchange factor (GEF), which activates Rac Rho small GTPases by exchanging bound GDP for free GTP. Its GEF activity may be enhanced by ELMO1. In Homo sapiens (Human), this protein is Dedicator of cytokinesis protein 1 (DOCK1).